We begin with the raw amino-acid sequence, 1074 residues long: Formin-G (1074 aa).

The GBD/FH3 domain occupies Leu-34–Ile-423. Disordered stretches follow at residues Gln-476–Ser-507 and Phe-549–Ser-639. Residues Ser-481–Ser-503 show a composition bias toward low complexity. Positions Asp-502–Met-530 form a coiled coil. Residues Phe-549–Gln-561 show a composition bias toward polar residues. Residues Ala-568 to Ser-610 show a composition bias toward pro residues. The 27-residue stretch at Gly-597–Thr-623 folds into the FH1 domain. The region spanning Asn-631–Asn-1031 is the FH2 domain. A coiled-coil region spans residues Asp-914–Ser-971. In terms of domain architecture, DAD spans Gly-1037–Asn-1073. Residues Thr-1053–Lys-1074 form a disordered region. Polar residues predominate over residues Glu-1062–Lys-1074.

It belongs to the formin homology family. Diaphanous subfamily. As to quaternary structure, interacts (via GBD/FH3 domain) with activated Rho-GTPases.

Formins play an important role in the nucleation of actin and the formation of linear actin filaments. The polypeptide is Formin-G (forG) (Dictyostelium discoideum (Social amoeba)).